Here is a 369-residue protein sequence, read N- to C-terminus: 4-hydroxy-3-methylbut-2-en-1-yl diphosphate synthase (flavodoxin) (369 aa).

The [4Fe-4S] cluster site is built by Cys270, Cys273, Cys305, and Glu312.

It belongs to the IspG family. [4Fe-4S] cluster serves as cofactor.

The catalysed reaction is (2E)-4-hydroxy-3-methylbut-2-enyl diphosphate + oxidized [flavodoxin] + H2O + 2 H(+) = 2-C-methyl-D-erythritol 2,4-cyclic diphosphate + reduced [flavodoxin]. It participates in isoprenoid biosynthesis; isopentenyl diphosphate biosynthesis via DXP pathway; isopentenyl diphosphate from 1-deoxy-D-xylulose 5-phosphate: step 5/6. In terms of biological role, converts 2C-methyl-D-erythritol 2,4-cyclodiphosphate (ME-2,4cPP) into 1-hydroxy-2-methyl-2-(E)-butenyl 4-diphosphate. The protein is 4-hydroxy-3-methylbut-2-en-1-yl diphosphate synthase (flavodoxin) of Pseudomonas putida (strain ATCC 700007 / DSM 6899 / JCM 31910 / BCRC 17059 / LMG 24140 / F1).